The sequence spans 201 residues: Adenylyl-sulfate kinase (201 aa).

Gly-35–Ser-42 contacts ATP. Ser-109 functions as the Phosphoserine intermediate in the catalytic mechanism.

It belongs to the APS kinase family.

It catalyses the reaction adenosine 5'-phosphosulfate + ATP = 3'-phosphoadenylyl sulfate + ADP + H(+). It functions in the pathway sulfur metabolism; hydrogen sulfide biosynthesis; sulfite from sulfate: step 2/3. Its function is as follows. Catalyzes the synthesis of activated sulfate. This Salmonella paratyphi A (strain AKU_12601) protein is Adenylyl-sulfate kinase.